We begin with the raw amino-acid sequence, 325 residues long: GMP reductase (325 aa).

Residue C174 is the Thioimidate intermediate of the active site. M203–V226 contributes to the NADP(+) binding site.

The protein belongs to the IMPDH/GMPR family. GuaC type 2 subfamily.

It carries out the reaction IMP + NH4(+) + NADP(+) = GMP + NADPH + 2 H(+). In terms of biological role, catalyzes the irreversible NADPH-dependent deamination of GMP to IMP. It functions in the conversion of nucleobase, nucleoside and nucleotide derivatives of G to A nucleotides, and in maintaining the intracellular balance of A and G nucleotides. This is GMP reductase from Staphylococcus carnosus (strain TM300).